The chain runs to 1336 residues: SH3 domain and tetratricopeptide repeat-containing protein 1 (1336 aa).

An N-acetylmethionine modification is found at Met-1. Disordered regions lie at residues 1–76 (MENL…PPCQ) and 225–266 (TGPR…SEEV). Residues 18-27 (GPVGPSGGGS) are compositionally biased toward gly residues. The segment covering 46–61 (AGPEEAKAPVRGDEAP) has biased composition (basic and acidic residues). Composition is skewed to low complexity over residues 62-74 (PARVAGPAAGTPP) and 247-266 (EAAPETDSSPPSPSVSSEEV). The SH3 domain occupies 305–368 (MAVGLASALA…RSSLISMQGP (64 aa)). TPR repeat units follow at residues 560 to 593 (ARLCFLLGRLCSRRLKLSQARVYFEEALGALEGS), 601 to 634 (VAVYANLASIYRKQKNREKCAQVVPKAMALLLGT), 665 to 698 (ARACFLLARHHVHLKQPEEALPFLERLLLLHRDS), 786 to 819 (GPLYTSLAQLYSHHGCHGPAITFMTQAVEASAIA), 863 to 896 (GVIANMVAVALKRTGRTRQAAESYYRALRVARDL), 946 to 979 (THVLLQLGHLCTRQGPAQQGKGYYEWALLVAVEM), 1027 to 1063 (GQLLETISQLYLSLGTERAYKSALDYTKRSLGIFIDL), and 1192 to 1225 (RVAYHRLAALQHRLGHGELAEHFYLKALSLCNSP). Position 1248 is a phosphotyrosine (Tyr-1248). The stretch at 1277 to 1311 (LKIYTRLATIYHNFLLDREKSLFFYQKARTFATEL) is one TPR 9 repeat.

This is SH3 domain and tetratricopeptide repeat-containing protein 1 (SH3TC1) from Homo sapiens (Human).